Consider the following 279-residue polypeptide: Undecaprenyl-diphosphatase (279 aa).

The next 8 helical transmembrane spans lie at 2–22, 44–64, 85–105, 113–133, 163–183, 188–208, 225–245, and 255–275; these read LFIE…TEWL, AFME…VIVI, WQLW…AVPL, FNHM…FLWI, VLSI…AIIL, TVAA…YSGL, LLVL…VIKL, and FTVF…YSVF.

It belongs to the UppP family.

The protein localises to the cell membrane. The enzyme catalyses di-trans,octa-cis-undecaprenyl diphosphate + H2O = di-trans,octa-cis-undecaprenyl phosphate + phosphate + H(+). Catalyzes the dephosphorylation of undecaprenyl diphosphate (UPP). Confers resistance to bacitracin. This chain is Undecaprenyl-diphosphatase, found in Streptococcus equi subsp. zooepidemicus (strain H70).